The sequence spans 62 residues: RVLLTICLLLFPLSALPLDGDQPADQPARHMQSAERNPRFDPVKRCCPYPSCIDIPFCDCCG.

An N-terminal signal peptide occupies residues 1 to 15; it reads RVLLTICLLLFPLSA. Residues 16–45 constitute a propeptide that is removed on maturation; sequence LPLDGDQPADQPARHMQSAERNPRFDPVKR. The segment at 17 to 37 is disordered; it reads PLDGDQPADQPARHMQSAERN. Cystine bridges form between C46–C60, C47–C58, and C52–C61. At C61 the chain carries Cysteine amide.

The protein belongs to the conotoxin M superfamily. As to expression, expressed by the venom duct.

It localises to the secreted. The chain is Conotoxin reg3.7 from Conus regius (Crown cone).